The chain runs to 473 residues: N-lysine methyltransferase SETD6 (473 aa).

Residues 1-23 (MAAPAKRARVSGGSPLVAPCPSP) are disordered. Residues serine 14 and serine 22 each carry the phosphoserine modification. The 225-residue stretch at 62–286 (PKVTVSRQGT…EGHEIFNTYG (225 aa)) folds into the SET domain. The residue at position 63 (lysine 63) is an N6-methylated lysine; by autocatalysis. 73-75 (AGY) is an S-adenosyl-L-methionine binding site. Tryptophan 122 contributes to the substrate binding site. An N6-methylated lysine; by autocatalysis modification is found at lysine 179. Tyrosine 223 contributes to the S-adenosyl-L-methionine binding site. 2 residues coordinate substrate: serine 224 and glutamine 226. Residues 251-252 (NH) and tyrosine 297 contribute to the S-adenosyl-L-methionine site. Lysine 372 is subject to N6-methylated lysine; by autocatalysis.

This sequence belongs to the class V-like SAM-binding methyltransferase superfamily. Histone-lysine methyltransferase family. SETD6 subfamily. As to quaternary structure, monomer, homodimer and homotrimer; these structures are stabilized in the presence of S-adenosyl-L-methionine (SAM). Automethylated.

The protein resides in the nucleus. The catalysed reaction is L-lysyl-[protein] + S-adenosyl-L-methionine = N(6)-methyl-L-lysyl-[protein] + S-adenosyl-L-homocysteine + H(+). It catalyses the reaction L-lysyl(8)-[histone H2AZ] + S-adenosyl-L-methionine = N(6)-methyl-L-lysyl(8)-[histone H2AZ] + S-adenosyl-L-homocysteine + H(+). Protein-lysine N-methyltransferase. Monomethylates 'Lys-310' of the RELA subunit of NF-kappa-B complex, leading to down-regulation of NF-kappa-B transcription factor activity. Monomethylates 'Lys-8' of H2AZ (H2AZK8me1). Required for the maintenance of embryonic stem cell self-renewal. Methylates PAK4. This chain is N-lysine methyltransferase SETD6 (Setd6), found in Mus musculus (Mouse).